The chain runs to 206 residues: Small ribosomal subunit protein uS4 (206 aa).

Residues 96-159 (SRLDNVVYRM…KKQARIVEGL (64 aa)) enclose the S4 RNA-binding domain.

This sequence belongs to the universal ribosomal protein uS4 family. As to quaternary structure, part of the 30S ribosomal subunit. Contacts protein S5. The interaction surface between S4 and S5 is involved in control of translational fidelity.

Its function is as follows. One of the primary rRNA binding proteins, it binds directly to 16S rRNA where it nucleates assembly of the body of the 30S subunit. With S5 and S12 plays an important role in translational accuracy. The chain is Small ribosomal subunit protein uS4 from Chromobacterium violaceum (strain ATCC 12472 / DSM 30191 / JCM 1249 / CCUG 213 / NBRC 12614 / NCIMB 9131 / NCTC 9757 / MK).